A 372-amino-acid chain; its full sequence is Glutamate 5-kinase (372 aa).

Residue Lys14 participates in ATP binding. Residues Ser54, Asp141, and Asn153 each coordinate substrate. 173–174 contacts ATP; that stretch reads TD. In terms of domain architecture, PUA spans 280–358; sequence AGRIVLDQGA…TDILSILGFV (79 aa).

Belongs to the glutamate 5-kinase family.

The protein resides in the cytoplasm. It carries out the reaction L-glutamate + ATP = L-glutamyl 5-phosphate + ADP. It participates in amino-acid biosynthesis; L-proline biosynthesis; L-glutamate 5-semialdehyde from L-glutamate: step 1/2. In terms of biological role, catalyzes the transfer of a phosphate group to glutamate to form L-glutamate 5-phosphate. This Herminiimonas arsenicoxydans protein is Glutamate 5-kinase.